A 353-amino-acid chain; its full sequence is N6-methyladenosine RNA demethylase ALKB1 (353 aa).

The 130-residue stretch at 223–352 folds into the Fe2OG dioxygenase domain; it reads IAQAAIVNFY…RINLNVRQMR (130 aa). Residues histidine 241, aspartate 243, and histidine 308 each coordinate Fe cation. Residue arginine 343 participates in 2-oxoglutarate binding.

It belongs to the alkB family. Fe(2+) is required as a cofactor.

Its subcellular location is the cytoplasm. The protein resides in the P-body. The enzyme catalyses an N(6)-methyladenosine in mRNA + 2-oxoglutarate + O2 = an adenosine in mRNA + formaldehyde + succinate + CO2. RNA demethylase that regulates the stability of mRNAs through an m(6)A-dependent manner. M6A is a modification present at internal sites of mRNAs and some non-coding RNAs and plays a role in mRNA stability and processing. Plays a role in pathogenicity towards plant host. In Pyricularia oryzae (strain 70-15 / ATCC MYA-4617 / FGSC 8958) (Rice blast fungus), this protein is N6-methyladenosine RNA demethylase ALKB1.